Here is a 207-residue protein sequence, read N- to C-terminus: Ribosomal RNA large subunit methyltransferase E (207 aa).

Residues methionine 1–lysine 20 are disordered. S-adenosyl-L-methionine-binding residues include glycine 56, tryptophan 58, aspartate 76, aspartate 94, and aspartate 116. Catalysis depends on lysine 156, which acts as the Proton acceptor.

Belongs to the class I-like SAM-binding methyltransferase superfamily. RNA methyltransferase RlmE family.

Its subcellular location is the cytoplasm. It catalyses the reaction uridine(2552) in 23S rRNA + S-adenosyl-L-methionine = 2'-O-methyluridine(2552) in 23S rRNA + S-adenosyl-L-homocysteine + H(+). Functionally, specifically methylates the uridine in position 2552 of 23S rRNA at the 2'-O position of the ribose in the fully assembled 50S ribosomal subunit. This Desulfosudis oleivorans (strain DSM 6200 / JCM 39069 / Hxd3) (Desulfococcus oleovorans) protein is Ribosomal RNA large subunit methyltransferase E.